Consider the following 494-residue polypeptide: WD repeat-containing protein 37 (494 aa).

2 stretches are compositionally biased toward polar residues: residues 1–13 (MPTE…TARQ) and 22–31 (SLSIRRTNSS). A disordered region spans residues 1-50 (MPTESASCSTARQTKQKRKSHSLSIRRTNSSEQERTGLPRDMLEGQDSKL). Residues 32 to 47 (EQERTGLPRDMLEGQD) are compositionally biased toward basic and acidic residues. WD repeat units follow at residues 154 to 194 (GHRD…CLVK) and 197 to 236 (GHVG…PTPQ). The segment at 237 to 265 (PVADTSISGEDEVECSDKDEPDLDGDVSS) is disordered. Residues 245–263 (GEDEVECSDKDEPDLDGDV) are compositionally biased toward acidic residues. WD repeat units follow at residues 279–318 (SHQG…LVHS), 321–360 (GHDQ…IHSV), 365–403 (GHTD…SPIA), 406–445 (RTDS…LARL), and 452–493 (GHRR…LLQE).

Forms homodimers. Interacts with PACS1. Interacts with PACS2.

Its subcellular location is the cytoplasm. The protein localises to the nucleus. Functionally, required for normal ER Ca2+ handling in lymphocytes. Together with PACS1, it plays an essential role in stabilizing peripheral lymphocyte populations. The polypeptide is WD repeat-containing protein 37 (WDR37) (Homo sapiens (Human)).